The primary structure comprises 354 residues: MERNTRVVKVANLKIGGNNPIIIQSMTNTNSADVEATVKQINNLEKVGCQLVRMTINNIKAAEAIKEIKKKVSLPLVADIHFDYRLALLAIKNGIDKLRINPGNIGSDENVKKVVEAAKEKNIPIRIGVNSGSIEKEILEKYGKPCVDALVESAMYHIRLLEKFDFFDIIVSLKSSNVKMMVEAYRKISSLVDYPLHLGVTEAGTKFQGTVKSAIGIGALLVDGIGDTLRVSLTENPVEEIKVAKEILKVLDLSDEGVEIISCPTCGRTEIDLIGLAKQVEEEFRTKKNKFKIAVMGCVVNGPGEAREADYGIAAGRGIGILFKKGEIIKKVSESNLLEELKKMISEDLENKKD.

Cysteine 263, cysteine 266, cysteine 298, and glutamate 305 together coordinate [4Fe-4S] cluster.

Belongs to the IspG family. [4Fe-4S] cluster is required as a cofactor.

It carries out the reaction (2E)-4-hydroxy-3-methylbut-2-enyl diphosphate + oxidized [flavodoxin] + H2O + 2 H(+) = 2-C-methyl-D-erythritol 2,4-cyclic diphosphate + reduced [flavodoxin]. It functions in the pathway isoprenoid biosynthesis; isopentenyl diphosphate biosynthesis via DXP pathway; isopentenyl diphosphate from 1-deoxy-D-xylulose 5-phosphate: step 5/6. Its function is as follows. Converts 2C-methyl-D-erythritol 2,4-cyclodiphosphate (ME-2,4cPP) into 1-hydroxy-2-methyl-2-(E)-butenyl 4-diphosphate. This is 4-hydroxy-3-methylbut-2-en-1-yl diphosphate synthase (flavodoxin) from Fusobacterium nucleatum subsp. nucleatum (strain ATCC 25586 / DSM 15643 / BCRC 10681 / CIP 101130 / JCM 8532 / KCTC 2640 / LMG 13131 / VPI 4355).